A 205-amino-acid chain; its full sequence is Nitrophorin-4 (205 aa).

The N-terminal stretch at 1-21 is a signal peptide; it reads MKSYTSLLAVAILCLFGGVNG. 2 disulfide bridges follow: C23/C143 and C62/C192. H80 is a heme binding site.

Belongs to the calycin superfamily. Nitrophorin family. The cofactor is heme b. Salivary gland (at protein level).

It is found in the secreted. The enzyme catalyses 3 nitrite + 2 H(+) = 2 nitric oxide + nitrate + H2O. In terms of biological role, heme-based protein that delivers nitric oxide gas (NO) to the victim while feeding, resulting in vasodilation and inhibition of platelet aggregation. Reversibly binds nitric oxide (NO). Also binds tightly to histamine, which is released by the host to induce wound healing. NO release is pH dependent and linked to loop dynamics. This Rhodnius prolixus (Triatomid bug) protein is Nitrophorin-4.